The sequence spans 47 residues: Laccase-2d (47 aa).

The region spanning 2 to 47 (TGPVADLHIINKDLSPDGFQRPTVVAGGGRDVVSIGRAGDNVTIRF) is the Plastocyanin-like domain.

It belongs to the multicopper oxidase family. As to quaternary structure, homodimer. The cofactor is Cu cation. N-glycosylated; contains 17% carbohydrates.

It localises to the secreted. It carries out the reaction 4 hydroquinone + O2 = 4 benzosemiquinone + 2 H2O. With respect to regulation, inhibited by sodium azide, SDS and mercaptoethanol, but not by 4-hexyl resocinol, L-cysteine and dithiothreitol. Activity is inhibited by the heavy metal ions Cr, W, Sn, Ag(+) and Hg(2+), but not by Pb(2+), Fe(3+), Ni(2+), Li(2+), Co(2+) or Cd(2+). Functionally, lignin degradation and detoxification of lignin-derived products. Has highest activity towards ABTS, also active towards ferulic acid and guaiacol, but is not active towards tyrosine, vanillic acid, 2,5-dimethyl aniline, p-anisidine or violuric acid. The sequence is that of Laccase-2d from Cerrena unicolor (Canker rot fungus).